Consider the following 484-residue polypeptide: Mitochondrial metal transporter 2 (484 aa).

Residues 1 to 56 (MLRISIDSIKQFGSFVPGYNNTSYHAAGRAIRTSSLYSTMISANPRRCLHSSKLLN) constitute a mitochondrion transit peptide. Residues 73 to 82 (SSQNGSNSRQ) are compositionally biased toward polar residues. Residues 73–114 (SSQNGSNSRQNESEGKKEGKASSVKSLLQHTHSHSHTHMHDN) are disordered. Residues 83-92 (NESEGKKEGK) show a composition bias toward basic and acidic residues. A run of 5 helical transmembrane segments spans residues 132-152 (ITWI…VGGI), 158-178 (ALLA…LTLF), 209-229 (ILAM…VGPV), 256-276 (ATNV…EWVF), and 316-336 (YFFN…GLII). The tract at residues 453 to 484 (DSKGDLEHSHDTKSTNHTHTHSDSADTHTHKH) is disordered.

This sequence belongs to the cation diffusion facilitator (CDF) transporter (TC 2.A.4) family. SLC30A subfamily.

It is found in the mitochondrion membrane. Its function is as follows. Mitochondrial metal transporter involved in mitochondrial iron accumulation. The sequence is that of Mitochondrial metal transporter 2 (MMT2) from Saccharomyces cerevisiae (strain ATCC 204508 / S288c) (Baker's yeast).